Here is a 258-residue protein sequence, read N- to C-terminus: Phosphate import ATP-binding protein PstB (258 aa).

An ABC transporter domain is found at 5-247 (LDLKGVNIYY…EKIFSNPTEK (243 aa)). ATP is bound at residue 37-44 (GASGCGKT).

It belongs to the ABC transporter superfamily. Phosphate importer (TC 3.A.1.7) family. As to quaternary structure, the complex is composed of two ATP-binding proteins (PstB), two transmembrane proteins (PstC and PstA) and a solute-binding protein (PstS).

The protein localises to the cell membrane. It carries out the reaction phosphate(out) + ATP + H2O = ADP + 2 phosphate(in) + H(+). Part of the ABC transporter complex PstSACB involved in phosphate import. Responsible for energy coupling to the transport system. The sequence is that of Phosphate import ATP-binding protein PstB from Mycobacterium leprae (strain TN).